The primary structure comprises 661 residues: uncharacterized protein (661 aa).

7 helical membrane passes run 37–57 (VFLGLILALMVVVVALTLFLS), 87–107 (INSPAPWIGLVALAMAGAVFI), 120–140 (WLLLGVLLSLLFVVNGLNVIL), 158–178 (VFWQFLWIYGIVIVVAIPIIV), 243–263 (LLDILDSILTLISFTAILYTI), 266–286 (TLMWGLIGYAVFGTVVAIAIG), and 341–361 (FNLLIIWQALISLFQLGYNYF). The 288-residue stretch at 123 to 410 (LGVLLSLLFV…VTNQIQNITE (288 aa)) folds into the ABC transmembrane type-1 domain. Positions 453–659 (VALENVTLSP…AEGRWQISPI (207 aa)) constitute an ABC transporter domain. 487–494 (GPSGSGKS) serves as a coordination point for ATP.

The protein belongs to the ABC transporter superfamily.

The protein localises to the cell inner membrane. This is an uncharacterized protein from Synechocystis sp. (strain ATCC 27184 / PCC 6803 / Kazusa).